The following is a 302-amino-acid chain: Ribosomal RNA small subunit methyltransferase A (302 aa).

S-adenosyl-L-methionine contacts are provided by Asn27, Leu29, Gly54, Glu75, Asp100, and Asn138.

It belongs to the class I-like SAM-binding methyltransferase superfamily. rRNA adenine N(6)-methyltransferase family. RsmA subfamily.

The protein resides in the cytoplasm. It catalyses the reaction adenosine(1518)/adenosine(1519) in 16S rRNA + 4 S-adenosyl-L-methionine = N(6)-dimethyladenosine(1518)/N(6)-dimethyladenosine(1519) in 16S rRNA + 4 S-adenosyl-L-homocysteine + 4 H(+). Specifically dimethylates two adjacent adenosines (A1518 and A1519) in the loop of a conserved hairpin near the 3'-end of 16S rRNA in the 30S particle. May play a critical role in biogenesis of 30S subunits. The protein is Ribosomal RNA small subunit methyltransferase A of Natranaerobius thermophilus (strain ATCC BAA-1301 / DSM 18059 / JW/NM-WN-LF).